The sequence spans 65 residues: uncharacterized protein (65 aa).

The chain crosses the membrane as a helical span at residues 37–57 (ILAIMTSVLPVLLIYIIWIFI).

Its subcellular location is the cell membrane. This is an uncharacterized protein from Bacillus subtilis (strain 168).